Here is a 283-residue protein sequence, read N- to C-terminus: Acetylglutamate kinase (283 aa).

Residues 63 to 64 (GG), Arg85, and Asn178 each bind substrate.

It belongs to the acetylglutamate kinase family. ArgB subfamily.

Its subcellular location is the cytoplasm. The enzyme catalyses N-acetyl-L-glutamate + ATP = N-acetyl-L-glutamyl 5-phosphate + ADP. Its pathway is amino-acid biosynthesis; L-arginine biosynthesis; N(2)-acetyl-L-ornithine from L-glutamate: step 2/4. Catalyzes the ATP-dependent phosphorylation of N-acetyl-L-glutamate. In Prochlorococcus marinus (strain MIT 9301), this protein is Acetylglutamate kinase.